A 1456-amino-acid polypeptide reads, in one-letter code: ABC transporter G family member 44 (1456 aa).

In terms of domain architecture, ABC transporter 1 spans alanine 169–aspartate 442. Glycine 202–threonine 209 is a binding site for ATP. The ABC transmembrane type-2 1 domain occupies glutamate 520–phenylalanine 733. 6 helical membrane-spanning segments follow: residues phenylalanine 538 to phenylalanine 558, glycine 571 to serine 591, isoleucine 626 to phenylalanine 646, leucine 658 to glycine 678, valine 682 to isoleucine 702, and isoleucine 768 to leucine 788. Residues asparagine 812 to glutamate 844 are disordered. Polar residues predominate over residues threonine 814–arginine 835. An ABC transporter 2 domain is found at valine 858 to glutamate 1110. Position 903–910 (glycine 903–threonine 910) interacts with ATP. One can recognise an ABC transmembrane type-2 2 domain in the interval threonine 1183 to phenylalanine 1397. The next 7 helical transmembrane spans lie at tyrosine 1202–tryptophan 1222, tyrosine 1242–valine 1262, leucine 1290–phenylalanine 1310, phenylalanine 1317–leucine 1337, isoleucine 1347–isoleucine 1367, tryptophan 1378–glycine 1398, and phenylalanine 1425–serine 1445.

Belongs to the ABC transporter superfamily. ABCG family. PDR (TC 3.A.1.205) subfamily.

It localises to the membrane. May be a general defense protein. The polypeptide is ABC transporter G family member 44 (Oryza sativa subsp. japonica (Rice)).